Reading from the N-terminus, the 507-residue chain is Glycerol kinase 1 (507 aa).

T12 is a binding site for ADP. 3 residues coordinate ATP: T12, T13, and S14. Residue T12 coordinates sn-glycerol 3-phosphate. Residue R16 participates in ADP binding. The sn-glycerol 3-phosphate site is built by R82, E83, Y134, and D249. R82, E83, Y134, D249, and Q250 together coordinate glycerol. Positions 271 and 315 each coordinate ADP. ATP contacts are provided by T271, G315, Q319, and G416. ADP is bound by residues G416 and N420.

Belongs to the FGGY kinase family.

It catalyses the reaction glycerol + ATP = sn-glycerol 3-phosphate + ADP + H(+). The protein operates within polyol metabolism; glycerol degradation via glycerol kinase pathway; sn-glycerol 3-phosphate from glycerol: step 1/1. With respect to regulation, inhibited by fructose 1,6-bisphosphate (FBP). Functionally, key enzyme in the regulation of glycerol uptake and metabolism. Catalyzes the phosphorylation of glycerol to yield sn-glycerol 3-phosphate. This Streptomyces coelicolor (strain ATCC BAA-471 / A3(2) / M145) protein is Glycerol kinase 1.